Here is a 695-residue protein sequence, read N- to C-terminus: Follicle-stimulating hormone receptor (695 aa).

The first 17 residues, 1 to 17, serve as a signal peptide directing secretion; that stretch reads MALLLVSLLAFLSLGSG. 2 disulfides stabilise this stretch: cysteine 18–cysteine 25 and cysteine 23–cysteine 32. In terms of domain architecture, LRRNT spans 18–46; that stretch reads CHHRICHCSNRVFLCQESKVTEIPSDLPR. Topologically, residues 18 to 366 are extracellular; sequence CHHRICHCSN…EDIMGYNILR (349 aa). 9 LRR repeats span residues 49-72, 73-97, 98-118, 119-143, 144-169, 170-192, 193-216, 217-240, and 241-259; these read IELR…FGDL, EKIE…LPKL, HEIR…AFQN, LPNL…KIHS, LQKV…VGLS, FESV…AFNG, TQLD…VFHG, ASGP…GLEN, and LKKL…PTLE. N-linked (GlcNAc...) asparagine glycans are attached at residues asparagine 191 and asparagine 199. Disulfide bonds link cysteine 275–cysteine 346, cysteine 276–cysteine 292, cysteine 276–cysteine 356, and cysteine 292–cysteine 338. Asparagine 293 and asparagine 318 each carry an N-linked (GlcNAc...) asparagine glycan. Tyrosine 335 carries the post-translational modification Sulfotyrosine. The helical transmembrane segment at 367–387 threads the bilayer; it reads VLIWFISILAITGNIIVLVIL. Over 388-398 the chain is Cytoplasmic; sequence TTSQYKLTVPR. The chain crosses the membrane as a helical span at residues 399–421; it reads FLMCNLAFADLCIGIYLLLIASV. Over 422–443 the chain is Extracellular; the sequence is DIHTKSQYHNYAIDWQTGAGCD. Residues cysteine 442 and cysteine 517 are joined by a disulfide bond. The helical transmembrane segment at 444-465 threads the bilayer; the sequence is AAGFFTVFASELSVYTLTAITL. Residues 466–485 are Cytoplasmic-facing; that stretch reads ERWHTITHAMQLDCKVQLRH. The chain crosses the membrane as a helical span at residues 486-508; that stretch reads AASVMVMGWIFAFAAALFPIFGI. Topologically, residues 509–528 are extracellular; it reads SSYMKVSICLPMDIDSPLSQ. Residues 529–550 form a helical membrane-spanning segment; that stretch reads LYVMSLLVLNVLAFVVICGCYI. The Cytoplasmic segment spans residues 551–573; sequence HIYLTVRNPNIVSSSSDTRIAKR. The helical transmembrane segment at 574 to 597 threads the bilayer; sequence MAMLIFTDFLCMAPISFFAISASL. Topologically, residues 598-608 are extracellular; the sequence is KVPLITVSKAK. A helical transmembrane segment spans residues 609–630; that stretch reads ILLVLFHPINSCANPFLYAIFT. Topologically, residues 631 to 695 are cytoplasmic; the sequence is KNFRRDFFIL…LVPLSHLAQN (65 aa).

It belongs to the G-protein coupled receptor 1 family. FSH/LSH/TSH subfamily. Homotrimer. Functions as a homotrimer binding the FSH hormone heterodimer composed of CGA and FSHB. Interacts with ARRB2. Interacts with APPL2; interaction is independent of follicle stimulating hormone stimulation. Post-translationally, sulfated. In terms of processing, N-glycosylated; indirectly required for FSH-binding, possibly via a conformational change that allows high affinity binding of hormone. Sertoli cells and ovarian granulosa cells.

Its subcellular location is the cell membrane. Its function is as follows. G protein-coupled receptor for follitropin, the follicle-stimulating hormone. Through cAMP production activates the downstream PI3K-AKT and ERK1/ERK2 signaling pathways. This chain is Follicle-stimulating hormone receptor (FSHR), found in Homo sapiens (Human).